The following is a 236-amino-acid chain: uncharacterized protein (236 aa).

Positions 1–29 are disordered; sequence MNNEKNKQDRENLNRQDERKSSEIKSERK.

This is an uncharacterized protein from Staphylococcus aureus.